A 576-amino-acid polypeptide reads, in one-letter code: FtsZ-localized protein C (576 aa).

As to quaternary structure, interacts with FtsZ filaments.

Its subcellular location is the cytoplasm. It localises to the cell inner membrane. In terms of biological role, membrane anchor for FtsZ. Binds and recruits FtsZ polymers to membranes early in the cell cycle. May also improve the efficiency of cytokinesis through the regulation of cell wall hydrolysis. In Caulobacter vibrioides (strain NA1000 / CB15N) (Caulobacter crescentus), this protein is FtsZ-localized protein C.